The chain runs to 285 residues: Bifunctional protein FolD (285 aa).

Residues 165–167 (GRS) and Ser-190 each bind NADP(+).

This sequence belongs to the tetrahydrofolate dehydrogenase/cyclohydrolase family. In terms of assembly, homodimer.

The catalysed reaction is (6R)-5,10-methylene-5,6,7,8-tetrahydrofolate + NADP(+) = (6R)-5,10-methenyltetrahydrofolate + NADPH. The enzyme catalyses (6R)-5,10-methenyltetrahydrofolate + H2O = (6R)-10-formyltetrahydrofolate + H(+). It participates in one-carbon metabolism; tetrahydrofolate interconversion. Functionally, catalyzes the oxidation of 5,10-methylenetetrahydrofolate to 5,10-methenyltetrahydrofolate and then the hydrolysis of 5,10-methenyltetrahydrofolate to 10-formyltetrahydrofolate. The chain is Bifunctional protein FolD from Burkholderia cenocepacia (strain HI2424).